We begin with the raw amino-acid sequence, 63 residues long: Toxin Cn11 (63 aa).

The region spanning arginine 2–cysteine 63 is the LCN-type CS-alpha/beta domain. 4 cysteine pairs are disulfide-bonded: cysteine 12-cysteine 63, cysteine 16-cysteine 37, cysteine 23-cysteine 44, and cysteine 27-cysteine 46.

The protein belongs to the long (4 C-C) scorpion toxin superfamily. Sodium channel inhibitor family. Expressed by the venom gland.

It is found in the secreted. First blocker of sodium channels (Nav) found in scorpions. Is lethal to crustaceans (Cambarellus montezumae), less toxic to insects (crickets) and non-toxic to mammals (mice) at the doses assayed. This chain is Toxin Cn11, found in Centruroides noxius (Mexican scorpion).